The chain runs to 175 residues: Small ribosomal subunit protein mS38 (175 aa).

This sequence belongs to the mitochondrion-specific ribosomal protein mS38 family. In terms of assembly, component of the mitochondrial small ribosomal subunit (mt-SSU). Mature yeast 74S mitochondrial ribosomes consist of a small (37S) and a large (54S) subunit. The 37S small subunit contains a 15S ribosomal RNA (15S mt-rRNA) and at least 32 different proteins. The 54S large subunit contains a 21S rRNA (21S mt-rRNA) and at least 45 different proteins.

The protein resides in the mitochondrion. It is found in the mitochondrion inner membrane. In terms of biological role, component of the mitochondrial ribosome (mitoribosome), a dedicated translation machinery responsible for the synthesis of mitochondrial genome-encoded proteins, including at least some of the essential transmembrane subunits of the mitochondrial respiratory chain. The mitoribosomes are attached to the mitochondrial inner membrane and translation products are cotranslationally integrated into the membrane. mS38 is also involved in the splicing of the COX1 mRNA. The polypeptide is Small ribosomal subunit protein mS38 (cox24) (Schizosaccharomyces pombe (strain 972 / ATCC 24843) (Fission yeast)).